Here is a 341-residue protein sequence, read N- to C-terminus: Methionine import ATP-binding protein MetN 3 (341 aa).

Residues 2 to 241 enclose the ABC transporter domain; the sequence is ILLENVKKIY…PQQDITKRFV (240 aa). 38 to 45 contributes to the ATP binding site; the sequence is GYSGAGKS.

This sequence belongs to the ABC transporter superfamily. Methionine importer (TC 3.A.1.24) family. The complex is composed of two ATP-binding proteins (MetN), two transmembrane proteins (MetI) and a solute-binding protein (MetQ).

The protein localises to the cell membrane. The enzyme catalyses L-methionine(out) + ATP + H2O = L-methionine(in) + ADP + phosphate + H(+). It carries out the reaction D-methionine(out) + ATP + H2O = D-methionine(in) + ADP + phosphate + H(+). Functionally, part of the ABC transporter complex MetNIQ involved in methionine import. Responsible for energy coupling to the transport system. This is Methionine import ATP-binding protein MetN 3 from Bacillus cereus (strain ATCC 10987 / NRS 248).